The following is a 314-amino-acid chain: 4-hydroxy-3-methylbut-2-enyl diphosphate reductase (314 aa).

Residue Cys12 participates in [4Fe-4S] cluster binding. (2E)-4-hydroxy-3-methylbut-2-enyl diphosphate contacts are provided by His41 and His74. Residues His41 and His74 each coordinate dimethylallyl diphosphate. His41 and His74 together coordinate isopentenyl diphosphate. [4Fe-4S] cluster is bound at residue Cys96. His124 contacts (2E)-4-hydroxy-3-methylbut-2-enyl diphosphate. His124 lines the dimethylallyl diphosphate pocket. His124 contributes to the isopentenyl diphosphate binding site. Catalysis depends on Glu126, which acts as the Proton donor. Residue Thr167 coordinates (2E)-4-hydroxy-3-methylbut-2-enyl diphosphate. Cys197 contributes to the [4Fe-4S] cluster binding site. 4 residues coordinate (2E)-4-hydroxy-3-methylbut-2-enyl diphosphate: Ser225, Ser226, Asn227, and Ser269. Positions 225, 226, 227, and 269 each coordinate dimethylallyl diphosphate. Isopentenyl diphosphate is bound by residues Ser225, Ser226, Asn227, and Ser269.

This sequence belongs to the IspH family. [4Fe-4S] cluster is required as a cofactor.

The catalysed reaction is isopentenyl diphosphate + 2 oxidized [2Fe-2S]-[ferredoxin] + H2O = (2E)-4-hydroxy-3-methylbut-2-enyl diphosphate + 2 reduced [2Fe-2S]-[ferredoxin] + 2 H(+). It carries out the reaction dimethylallyl diphosphate + 2 oxidized [2Fe-2S]-[ferredoxin] + H2O = (2E)-4-hydroxy-3-methylbut-2-enyl diphosphate + 2 reduced [2Fe-2S]-[ferredoxin] + 2 H(+). The protein operates within isoprenoid biosynthesis; dimethylallyl diphosphate biosynthesis; dimethylallyl diphosphate from (2E)-4-hydroxy-3-methylbutenyl diphosphate: step 1/1. Its pathway is isoprenoid biosynthesis; isopentenyl diphosphate biosynthesis via DXP pathway; isopentenyl diphosphate from 1-deoxy-D-xylulose 5-phosphate: step 6/6. In terms of biological role, catalyzes the conversion of 1-hydroxy-2-methyl-2-(E)-butenyl 4-diphosphate (HMBPP) into a mixture of isopentenyl diphosphate (IPP) and dimethylallyl diphosphate (DMAPP). Acts in the terminal step of the DOXP/MEP pathway for isoprenoid precursor biosynthesis. This is 4-hydroxy-3-methylbut-2-enyl diphosphate reductase from Actinobacillus pleuropneumoniae serotype 5b (strain L20).